The following is a 205-amino-acid chain: Small ribosomal subunit protein uS4 (205 aa).

Positions 1-16 are enriched in basic and acidic residues; it reads MSKRETTKYKIDRRMG. Residues 1-46 are disordered; that stretch reads MSKRETTKYKIDRRMGENIWGRPKSPVNRRDYGPGQHGQRRKGKLS. One can recognise an S4 RNA-binding domain in the interval 94–157; it reads SRLDAVIYRA…KQLVLVLESV (64 aa).

The protein belongs to the universal ribosomal protein uS4 family. As to quaternary structure, part of the 30S ribosomal subunit. Contacts protein S5. The interaction surface between S4 and S5 is involved in control of translational fidelity.

Functionally, one of the primary rRNA binding proteins, it binds directly to 16S rRNA where it nucleates assembly of the body of the 30S subunit. In terms of biological role, with S5 and S12 plays an important role in translational accuracy. This is Small ribosomal subunit protein uS4 from Bartonella quintana (strain Toulouse) (Rochalimaea quintana).